A 232-amino-acid chain; its full sequence is Large ribosomal subunit protein uL1 (232 aa).

This sequence belongs to the universal ribosomal protein uL1 family. In terms of assembly, part of the 50S ribosomal subunit.

Binds directly to 23S rRNA. The L1 stalk is quite mobile in the ribosome, and is involved in E site tRNA release. In terms of biological role, protein L1 is also a translational repressor protein, it controls the translation of the L11 operon by binding to its mRNA. This chain is Large ribosomal subunit protein uL1, found in Francisella tularensis subsp. holarctica (strain LVS).